The primary structure comprises 1145 residues: Cation channel sperm-associated auxiliary subunit gamma 2 (1145 aa).

The signal sequence occupies residues 1–38 (MVSRPAMSPVSPVWPRKPNLWAFWVLRLVLLLSLKSWA). At 39–1061 (EDALQHCTWL…IHGLPLSSKR (1023 aa)) the chain is on the extracellular side. Intrachain disulfides connect cysteine 45-cysteine 106 and cysteine 160-cysteine 166. Asparagine 103 carries N-linked (GlcNAc...) asparagine glycosylation. An N-linked (GlcNAc...) asparagine glycan is attached at asparagine 178. Residues cysteine 289 and cysteine 344 are joined by a disulfide bond. Residues asparagine 356, asparagine 402, asparagine 672, and asparagine 743 are each glycosylated (N-linked (GlcNAc...) asparagine). Disulfide bonds link cysteine 395-cysteine 403, cysteine 634-cysteine 856, cysteine 802-cysteine 830, cysteine 878-cysteine 1042, cysteine 905-cysteine 914, and cysteine 1006-cysteine 1012. Asparagine 1038 carries an N-linked (GlcNAc...) asparagine glycan. A helical transmembrane segment spans residues 1062-1083 (TSFIVMVSTSFFIALVVFYILF). The Cytoplasmic portion of the chain corresponds to 1084 to 1145 (CLVWPHIVKA…KEDNVQAKTA (62 aa)).

This sequence belongs to the CATSPERG family. In terms of assembly, component of the CatSper complex or CatSpermasome composed of the core pore-forming members CATSPER1, CATSPER2, CATSPER3 and CATSPER4 as well as auxiliary members CATSPERB, CATSPERG2, CATSPERD, CATSPERE, CATSPERZ, C2CD6/CATSPERT, SLCO6C1, TMEM249, TMEM262 and EFCAB9. HSPA1 may be an additional auxiliary complex member. The core complex members CATSPER1, CATSPER2, CATSPER3 and CATSPER4 form a heterotetrameric channel. The auxiliary CATSPERB, CATSPERG2, CATSPERD and CATSPERE subunits form a pavilion-like structure over the pore which stabilizes the complex through interactions with CATSPER4, CATSPER3, CATSPER1 and CATSPER2 respectively. SLCO6C1 interacts with CATSPERE and TMEM262/CATSPERH interacts with CATSPERB, further stabilizing the complex. C2CD6/CATSPERT interacts at least with CATSPERD and is required for targeting the CatSper complex in the flagellar membrane. As to expression, testis-specific. Specifically expressed in the principal piece of the sperm tail (at protein level). Expressed in spermatocytes and spermatids within the seminiferous tubule but not in interstitial cells.

It localises to the cell projection. It is found in the cilium. The protein resides in the flagellum membrane. Functionally, auxiliary component of the CatSper complex, a complex involved in sperm cell hyperactivation. Sperm cell hyperactivation is needed for sperm motility which is essential late in the preparation of sperm for fertilization. This is Cation channel sperm-associated auxiliary subunit gamma 2 from Mus musculus (Mouse).